Consider the following 265-residue polypeptide: Methyl-coenzyme M reductase II subunit gamma (265 aa).

Coenzyme M is bound at residue Arg-123.

The protein belongs to the methyl-coenzyme M reductase gamma subunit family. As to quaternary structure, MCR is a hexamer of two alpha, two beta, and two gamma chains, forming a dimer of heterotrimers. The cofactor is coenzyme F430.

It carries out the reaction coenzyme B + methyl-coenzyme M = methane + coenzyme M-coenzyme B heterodisulfide. It participates in one-carbon metabolism; methyl-coenzyme M reduction; methane from methyl-coenzyme M: step 1/1. Functionally, component of the methyl-coenzyme M reductase (MCR) I that catalyzes the reductive cleavage of methyl-coenzyme M (CoM-S-CH3 or 2-(methylthio)ethanesulfonate) using coenzyme B (CoB or 7-mercaptoheptanoylthreonine phosphate) as reductant which results in the production of methane and the mixed heterodisulfide of CoB and CoM (CoM-S-S-CoB). This is the final step in methanogenesis. In Methanothermobacter marburgensis (strain ATCC BAA-927 / DSM 2133 / JCM 14651 / NBRC 100331 / OCM 82 / Marburg) (Methanobacterium thermoautotrophicum), this protein is Methyl-coenzyme M reductase II subunit gamma (mrtG).